The chain runs to 428 residues: UPF0229 protein YeaH (428 aa).

Basic and acidic residues predominate over residues G78 to R90. The tract at residues G78–E111 is disordered. Residues Q92–Q103 are compositionally biased toward gly residues.

It belongs to the UPF0229 family.

This is UPF0229 protein YeaH from Salmonella choleraesuis (strain SC-B67).